A 232-amino-acid chain; its full sequence is Phosphatidylserine decarboxylase proenzyme (232 aa).

S190 functions as the Schiff-base intermediate with substrate; via pyruvic acid in the catalytic mechanism. At S190 the chain carries Pyruvic acid (Ser); by autocatalysis.

The protein belongs to the phosphatidylserine decarboxylase family. PSD-A subfamily. Heterodimer of a large membrane-associated beta subunit and a small pyruvoyl-containing alpha subunit. Pyruvate serves as cofactor. Is synthesized initially as an inactive proenzyme. Formation of the active enzyme involves a self-maturation process in which the active site pyruvoyl group is generated from an internal serine residue via an autocatalytic post-translational modification. Two non-identical subunits are generated from the proenzyme in this reaction, and the pyruvate is formed at the N-terminus of the alpha chain, which is derived from the carboxyl end of the proenzyme. The post-translation cleavage follows an unusual pathway, termed non-hydrolytic serinolysis, in which the side chain hydroxyl group of the serine supplies its oxygen atom to form the C-terminus of the beta chain, while the remainder of the serine residue undergoes an oxidative deamination to produce ammonia and the pyruvoyl prosthetic group on the alpha chain.

The protein resides in the cell membrane. It carries out the reaction a 1,2-diacyl-sn-glycero-3-phospho-L-serine + H(+) = a 1,2-diacyl-sn-glycero-3-phosphoethanolamine + CO2. Its pathway is phospholipid metabolism; phosphatidylethanolamine biosynthesis; phosphatidylethanolamine from CDP-diacylglycerol: step 2/2. In terms of biological role, catalyzes the formation of phosphatidylethanolamine (PtdEtn) from phosphatidylserine (PtdSer). In Beijerinckia indica subsp. indica (strain ATCC 9039 / DSM 1715 / NCIMB 8712), this protein is Phosphatidylserine decarboxylase proenzyme.